The chain runs to 607 residues: Dolichyl-diphosphooligosaccharide--protein glycosyltransferase subunit 1 (607 aa).

The N-terminal stretch at 1–23 (MEAPAAGLFLLLLLGTWAPAPGS) is a signal peptide. Topologically, residues 24-438 (ASSEAPPLIN…TFNKVLMLQE (415 aa)) are lumenal. Lys187 is subject to N6-acetyllysine. A glycan (N-linked (GlcNAc...) asparagine) is linked at Asn299. The chain crosses the membrane as a helical span at residues 439–457 (PLLVVAAFYILFFTVIIYV). Residues 458-607 (RLDFSITKDP…TKIDHILDAL (150 aa)) lie on the Cytoplasmic side of the membrane. Position 538 is an N6-acetyllysine; alternate (Lys538). Residue Lys538 forms a Glycyl lysine isopeptide (Lys-Gly) (interchain with G-Cter in SUMO2); alternate linkage.

Belongs to the OST1 family. In terms of assembly, component of the oligosaccharyltransferase (OST) complex. OST exists in two different complex forms which contain common core subunits RPN1, RPN2, OST48, OST4, DAD1 and TMEM258, either STT3A or STT3B as catalytic subunits, and form-specific accessory subunits. STT3A complex assembly occurs through the formation of 3 subcomplexes. Subcomplex 1 contains RPN1 and TMEM258, subcomplex 2 contains the STT3A-specific subunits STT3A, DC2/OSTC, and KCP2 as well as the core subunit OST4, and subcomplex 3 contains RPN2, DAD1, and OST48. The STT3A complex can form stable complexes with the Sec61 complex or with both the Sec61 and TRAP complexes. Interacts with TMEM35A/NACHO. Ubiquitinated by the ECS(ASB11) complex. Ubiquitinated by RNF128, leading to degradation in a proteasome/lysosome-dependent manner. In terms of processing, ufmylated by UFL1 in response to endoplasmic reticulum stress, promoting reticulophagy of endoplasmic reticulum sheets. Expressed in all tissues tested.

The protein resides in the endoplasmic reticulum membrane. It is found in the melanosome. Its pathway is protein modification; protein glycosylation. Subunit of the oligosaccharyl transferase (OST) complex that catalyzes the initial transfer of a defined glycan (Glc(3)Man(9)GlcNAc(2) in eukaryotes) from the lipid carrier dolichol-pyrophosphate to an asparagine residue within an Asn-X-Ser/Thr consensus motif in nascent polypeptide chains, the first step in protein N-glycosylation. N-glycosylation occurs cotranslationally and the complex associates with the Sec61 complex at the channel-forming translocon complex that mediates protein translocation across the endoplasmic reticulum (ER). All subunits are required for a maximal enzyme activity. The sequence is that of Dolichyl-diphosphooligosaccharide--protein glycosyltransferase subunit 1 from Homo sapiens (Human).